Reading from the N-terminus, the 199-residue chain is dTTP/UTP pyrophosphatase (199 aa).

The active-site Proton acceptor is the Asp-73.

It belongs to the Maf family. YhdE subfamily. The cofactor is a divalent metal cation.

The protein localises to the cytoplasm. The enzyme catalyses dTTP + H2O = dTMP + diphosphate + H(+). The catalysed reaction is UTP + H2O = UMP + diphosphate + H(+). Its function is as follows. Nucleoside triphosphate pyrophosphatase that hydrolyzes dTTP and UTP. May have a dual role in cell division arrest and in preventing the incorporation of modified nucleotides into cellular nucleic acids. The sequence is that of dTTP/UTP pyrophosphatase from Caldicellulosiruptor bescii (strain ATCC BAA-1888 / DSM 6725 / KCTC 15123 / Z-1320) (Anaerocellum thermophilum).